A 272-amino-acid chain; its full sequence is Orotidine 5'-phosphate decarboxylase (272 aa).

The Proton donor role is filled by Lys-95.

It belongs to the OMP decarboxylase family. Type 2 subfamily.

The catalysed reaction is orotidine 5'-phosphate + H(+) = UMP + CO2. It functions in the pathway pyrimidine metabolism; UMP biosynthesis via de novo pathway; UMP from orotate: step 2/2. The polypeptide is Orotidine 5'-phosphate decarboxylase (Cupriavidus metallidurans (strain ATCC 43123 / DSM 2839 / NBRC 102507 / CH34) (Ralstonia metallidurans)).